We begin with the raw amino-acid sequence, 142 residues long: Ribosome-binding factor A (142 aa).

A disordered region spans residues 118–142 (DKNGDAEVDDTQVDDEPSVDSEKGE). Acidic residues predominate over residues 123–136 (AEVDDTQVDDEPSV).

The protein belongs to the RbfA family. In terms of assembly, monomer. Binds 30S ribosomal subunits, but not 50S ribosomal subunits or 70S ribosomes.

Its subcellular location is the cytoplasm. Functionally, one of several proteins that assist in the late maturation steps of the functional core of the 30S ribosomal subunit. Associates with free 30S ribosomal subunits (but not with 30S subunits that are part of 70S ribosomes or polysomes). Required for efficient processing of 16S rRNA. May interact with the 5'-terminal helix region of 16S rRNA. The chain is Ribosome-binding factor A from Colwellia psychrerythraea (strain 34H / ATCC BAA-681) (Vibrio psychroerythus).